Here is a 190-residue protein sequence, read N- to C-terminus: Putative manganese efflux pump MntP (190 aa).

The next 6 helical transmembrane spans lie at 3 to 23 (PISLLFLALAMSTDAFAAALG), 41 to 61 (LIFGAIETITPVIGWGIGQVA), 69 to 89 (DHWIAFTLLLVLGLHMIYNGL), 105 to 125 (FWILAVTAFATSIDALAVGVG), 133 to 153 (IMVAALAIGLATTVMVTIGVM), and 168 to 188 (IVGGIVLIVVGTTILYEHLTA).

Belongs to the MntP (TC 9.B.29) family.

It localises to the cell inner membrane. Functionally, probably functions as a manganese efflux pump. This Pseudomonas syringae pv. tomato (strain ATCC BAA-871 / DC3000) protein is Putative manganese efflux pump MntP.